Here is a 970-residue protein sequence, read N- to C-terminus: Bifunctional glutamine synthetase adenylyltransferase/adenylyl-removing enzyme (970 aa).

The tract at residues 1–454 (MNSLPPRPSL…HFQQVFAAPQ (454 aa)) is adenylyl removase. The adenylyl transferase stretch occupies residues 468–970 (QAVLASIWAG…WRRVMEEGKA (503 aa)).

It belongs to the GlnE family. Mg(2+) is required as a cofactor.

It carries out the reaction [glutamine synthetase]-O(4)-(5'-adenylyl)-L-tyrosine + phosphate = [glutamine synthetase]-L-tyrosine + ADP. It catalyses the reaction [glutamine synthetase]-L-tyrosine + ATP = [glutamine synthetase]-O(4)-(5'-adenylyl)-L-tyrosine + diphosphate. Functionally, involved in the regulation of glutamine synthetase GlnA, a key enzyme in the process to assimilate ammonia. When cellular nitrogen levels are high, the C-terminal adenylyl transferase (AT) inactivates GlnA by covalent transfer of an adenylyl group from ATP to specific tyrosine residue of GlnA, thus reducing its activity. Conversely, when nitrogen levels are low, the N-terminal adenylyl removase (AR) activates GlnA by removing the adenylyl group by phosphorolysis, increasing its activity. The regulatory region of GlnE binds the signal transduction protein PII (GlnB) which indicates the nitrogen status of the cell. This Thioalkalivibrio sulfidiphilus (strain HL-EbGR7) protein is Bifunctional glutamine synthetase adenylyltransferase/adenylyl-removing enzyme.